Reading from the N-terminus, the 132-residue chain is Glycine cleavage system H protein (132 aa).

Residues Leu-24 to Arg-106 enclose the Lipoyl-binding domain. Lys-65 carries the N6-lipoyllysine modification.

It belongs to the GcvH family. The glycine cleavage system is composed of four proteins: P, T, L and H. It depends on (R)-lipoate as a cofactor.

Functionally, the glycine cleavage system catalyzes the degradation of glycine. The H protein shuttles the methylamine group of glycine from the P protein to the T protein. The protein is Glycine cleavage system H protein of Prochlorococcus marinus (strain MIT 9313).